Reading from the N-terminus, the 135-residue chain is Large-conductance mechanosensitive channel (135 aa).

2 helical membrane passes run 10–30 and 76–96; these read FAMK…AAFG and GAFI…FCAI.

This sequence belongs to the MscL family. Homopentamer.

The protein resides in the cell inner membrane. Functionally, channel that opens in response to stretch forces in the membrane lipid bilayer. May participate in the regulation of osmotic pressure changes within the cell. The protein is Large-conductance mechanosensitive channel of Proteus mirabilis (strain HI4320).